We begin with the raw amino-acid sequence, 79 residues long: Translational regulator CsrA (79 aa).

Belongs to the CsrA/RsmA family. As to quaternary structure, homodimer; the beta-strands of each monomer intercalate to form a hydrophobic core, while the alpha-helices form wings that extend away from the core.

It localises to the cytoplasm. Its function is as follows. A translational regulator that binds mRNA to regulate translation initiation and/or mRNA stability. Usually binds in the 5'-UTR at or near the Shine-Dalgarno sequence preventing ribosome-binding, thus repressing translation. Its main target seems to be the major flagellin gene, while its function is anatagonized by FliW. This Helicobacter hepaticus (strain ATCC 51449 / 3B1) protein is Translational regulator CsrA.